The chain runs to 255 residues: ParA family protein CPn_0805/CP_1066/CPj0805/CpB0834 (255 aa).

This sequence belongs to the ParA family.

This Chlamydia pneumoniae (Chlamydophila pneumoniae) protein is ParA family protein CPn_0805/CP_1066/CPj0805/CpB0834.